We begin with the raw amino-acid sequence, 1380 residues long: DNA-directed RNA polymerase subunit beta (1380 aa).

It belongs to the RNA polymerase beta chain family. As to quaternary structure, the RNAP catalytic core consists of 2 alpha, 1 beta, 1 beta' and 1 omega subunit. When a sigma factor is associated with the core the holoenzyme is formed, which can initiate transcription.

It catalyses the reaction RNA(n) + a ribonucleoside 5'-triphosphate = RNA(n+1) + diphosphate. Functionally, DNA-dependent RNA polymerase catalyzes the transcription of DNA into RNA using the four ribonucleoside triphosphates as substrates. The sequence is that of DNA-directed RNA polymerase subunit beta from Ehrlichia ruminantium (strain Welgevonden).